A 658-amino-acid chain; its full sequence is ATP-dependent RNA helicase MSS116, mitochondrial (658 aa).

The transit peptide at Met1–Ser35 directs the protein to the mitochondrion. Residues His40–Ser79 show a composition bias toward basic and acidic residues. A disordered region spans residues His40–Leu104. A Q motif motif is present at residues Thr126–Gln154. One can recognise a Helicase ATP-binding domain in the interval Lys158 to Leu343. Ala171–Thr178 is an ATP binding site. The DEAD box motif lies at Asp284–Asp287. The 157-residue stretch at Asn372–Ser528 folds into the Helicase C-terminal domain.

It belongs to the DEAD box helicase family. DDX18/HAS1 subfamily.

It is found in the mitochondrion matrix. The enzyme catalyses ATP + H2O = ADP + phosphate + H(+). Functionally, ATP-dependent RNA helicase required for mitochondrial splicing of group I and II introns. Also required for efficient mitochondrial translation. The protein is ATP-dependent RNA helicase MSS116, mitochondrial (MSS116) of Eremothecium gossypii (strain ATCC 10895 / CBS 109.51 / FGSC 9923 / NRRL Y-1056) (Yeast).